The chain runs to 581 residues: Threonine--tRNA ligase (581 aa).

Residues 185-478 are catalytic; sequence DHRKLGKELD…LVEHYGGAFP (294 aa). Residues Cys278, His329, and His455 each coordinate Zn(2+).

Belongs to the class-II aminoacyl-tRNA synthetase family. Homodimer. Zn(2+) is required as a cofactor.

The protein localises to the cytoplasm. The catalysed reaction is tRNA(Thr) + L-threonine + ATP = L-threonyl-tRNA(Thr) + AMP + diphosphate + H(+). Functionally, catalyzes the attachment of threonine to tRNA(Thr) in a two-step reaction: L-threonine is first activated by ATP to form Thr-AMP and then transferred to the acceptor end of tRNA(Thr). Also edits incorrectly charged L-seryl-tRNA(Thr). The chain is Threonine--tRNA ligase from Borreliella burgdorferi (strain ATCC 35210 / DSM 4680 / CIP 102532 / B31) (Borrelia burgdorferi).